Consider the following 370-residue polypeptide: MKFIDEARIEVIAGDGGDGSASMRREKFVPFGGPDGGDGGRGGSVYAIADRNINTLIDYRYAKKHLARNGENGRGSDCYGKGGDDVTLRMPVGTIISDMDTGELIADLTEHDQQVMLAQGGAGGLGNLHFKSSTNRAPRQKTDGKPGERRMLKLELKVLADVGLLGMPNAGKSTFISSVSNAKPKIADYPFTTLAPNLGVVRVGPSKSFVIADIPGLIEGAAEGAGLGHQFLRHLQRTGVLLHLVDLAPFDESVDPVAEATAIVGELRKYDEALYEKPRWLVLNKLDMVPEDEREARVADFLDRFGWDGPVFEISALTGQGCEALCYAIYDYLSEHSDAHRAAEAEDLAADVRFRDAPPAKGGATPGDDA.

The 159-residue stretch at 1–159 (MKFIDEARIE…RMLKLELKVL (159 aa)) folds into the Obg domain. Residues 128 to 147 (LHFKSSTNRAPRQKTDGKPG) are disordered. The OBG-type G domain occupies 160–334 (ADVGLLGMPN…LCYAIYDYLS (175 aa)). Residues 166-173 (GMPNAGKS), 191-195 (FTTLA), 213-216 (DIPG), 284-287 (NKLD), and 315-317 (SAL) contribute to the GTP site. Ser173 and Thr193 together coordinate Mg(2+).

This sequence belongs to the TRAFAC class OBG-HflX-like GTPase superfamily. OBG GTPase family. As to quaternary structure, monomer. It depends on Mg(2+) as a cofactor.

The protein resides in the cytoplasm. In terms of biological role, an essential GTPase which binds GTP, GDP and possibly (p)ppGpp with moderate affinity, with high nucleotide exchange rates and a fairly low GTP hydrolysis rate. Plays a role in control of the cell cycle, stress response, ribosome biogenesis and in those bacteria that undergo differentiation, in morphogenesis control. This chain is GTPase Obg, found in Burkholderia orbicola (strain MC0-3).